The primary structure comprises 209 residues: Tektin bundle-interacting protein 1 (209 aa).

Microtubule inner protein component of sperm flagellar doublet microtubules.

The protein localises to the cytoplasm. Its subcellular location is the cytoskeleton. It localises to the cilium axoneme. It is found in the flagellum axoneme. In terms of biological role, microtubule inner protein (MIP) part of the dynein-decorated doublet microtubules (DMTs) in cilia axoneme, which is required for motile cilia beating. Located at the center of the tektin bundle where may function to recruit tektins or stabilize the bundle. The protein is Tektin bundle-interacting protein 1 (TEKTIP1) of Macaca fascicularis (Crab-eating macaque).